Consider the following 248-residue polypeptide: Ubiquinone biosynthesis O-methyltransferase (248 aa).

S-adenosyl-L-methionine is bound by residues R41, G72, D93, and M136.

It belongs to the methyltransferase superfamily. UbiG/COQ3 family.

The enzyme catalyses a 3-demethylubiquinol + S-adenosyl-L-methionine = a ubiquinol + S-adenosyl-L-homocysteine + H(+). It catalyses the reaction a 3-(all-trans-polyprenyl)benzene-1,2-diol + S-adenosyl-L-methionine = a 2-methoxy-6-(all-trans-polyprenyl)phenol + S-adenosyl-L-homocysteine + H(+). Its pathway is cofactor biosynthesis; ubiquinone biosynthesis. Its function is as follows. O-methyltransferase that catalyzes the 2 O-methylation steps in the ubiquinone biosynthetic pathway. The protein is Ubiquinone biosynthesis O-methyltransferase of Sinorhizobium medicae (strain WSM419) (Ensifer medicae).